Consider the following 220-residue polypeptide: Deep-sea actinoporin Cjtox I (220 aa).

A signal peptide spans 1–19; the sequence is MNRLIILCLVAATIYSTIA. The propeptide occupies 20 to 42; the sequence is LPMKEDISNEERPTSVNEKPVKK. Residues Ser96, Val128, Ser146, Pro148, Tyr174, Tyr178, and Tyr179 each coordinate phosphocholine. A trp-rich region, which is important for the binding to lipid membrane region spans residues 146–161; sequence SVPYDYNWYSNWWNIK. The short motif at 185–187 is the Cell attachment site, crucial for protein stability element; the sequence is KGN.

This sequence belongs to the actinoporin family. Sea anemone subfamily. In terms of assembly, octamer or nonamer in membranes. Monomer in the soluble state. In terms of tissue distribution, expressed in tentacles.

The protein localises to the secreted. Its subcellular location is the nematocyst. It localises to the target cell membrane. In terms of biological role, probably acts in predation. Pore-forming protein that forms cations-selective hydrophilic pores of around 1 nm and causes cytolysis. Pore formation is a multi-step process that involves specific recognition of membrane sphingomyelin (but neither cholesterol nor phosphatidylcholine) using aromatic rich region and adjacent phosphocholine (POC) binding site, firm binding to the membrane (mainly driven by hydrophobic interactions) accompanied by the transfer of the N-terminal region to the lipid-water interface and finally pore formation after oligomerization of monomers. Shows hemolytic activity on equine erythrocytes. Hemolysis is moderately inhibited in presence of sphingomyelin, suggesting that this protein targets sphingomyelin. This Cribrinopsis japonica (Deep-sea anemone) protein is Deep-sea actinoporin Cjtox I.